The primary structure comprises 255 residues: Ditrans,polycis-undecaprenyl-diphosphate synthase ((2E,6E)-farnesyl-diphosphate specific) (255 aa).

Asp-21 is a catalytic residue. Asp-21 contacts Mg(2+). Residues 22–25 (GNGR), Trp-26, Arg-34, His-38, and 66–68 (SSE) contribute to the substrate site. The active-site Proton acceptor is Asn-69. Residues Trp-70, Arg-72, Arg-189, and 195-197 (RIS) each bind substrate. Residue Glu-208 coordinates Mg(2+).

It belongs to the UPP synthase family. Homodimer. Mg(2+) is required as a cofactor.

It carries out the reaction 8 isopentenyl diphosphate + (2E,6E)-farnesyl diphosphate = di-trans,octa-cis-undecaprenyl diphosphate + 8 diphosphate. Catalyzes the sequential condensation of isopentenyl diphosphate (IPP) with (2E,6E)-farnesyl diphosphate (E,E-FPP) to yield (2Z,6Z,10Z,14Z,18Z,22Z,26Z,30Z,34E,38E)-undecaprenyl diphosphate (di-trans,octa-cis-UPP). UPP is the precursor of glycosyl carrier lipid in the biosynthesis of bacterial cell wall polysaccharide components such as peptidoglycan and lipopolysaccharide. This Xylella fastidiosa (strain 9a5c) protein is Ditrans,polycis-undecaprenyl-diphosphate synthase ((2E,6E)-farnesyl-diphosphate specific).